Here is a 166-residue protein sequence, read N- to C-terminus: Phosphopantetheine adenylyltransferase (166 aa).

Ser-11 is a substrate binding site. ATP is bound by residues 11 to 12 (SF) and His-19. 3 residues coordinate substrate: Lys-43, Ala-76, and Arg-90. ATP is bound by residues 91–93 (GLR), Glu-101, and 126–132 (LQPISSS).

This sequence belongs to the bacterial CoaD family. Homohexamer. Requires Mg(2+) as cofactor.

Its subcellular location is the cytoplasm. The enzyme catalyses (R)-4'-phosphopantetheine + ATP + H(+) = 3'-dephospho-CoA + diphosphate. It participates in cofactor biosynthesis; coenzyme A biosynthesis; CoA from (R)-pantothenate: step 4/5. Its function is as follows. Reversibly transfers an adenylyl group from ATP to 4'-phosphopantetheine, yielding dephospho-CoA (dPCoA) and pyrophosphate. The sequence is that of Phosphopantetheine adenylyltransferase from Streptococcus equi subsp. zooepidemicus (strain H70).